Here is a 248-residue protein sequence, read N- to C-terminus: Small ribosomal subunit protein uS3 (248 aa).

The 75-residue stretch at 39-113 (IRAYLTKQLS…TIRINVVEVT (75 aa)) folds into the KH type-2 domain. Residues 218–248 (ERPEQKVPLQQPKRRQQRRRPTFEDRSAVEA) are disordered. Over residues 238-248 (PTFEDRSAVEA) the composition is skewed to basic and acidic residues.

Belongs to the universal ribosomal protein uS3 family. Part of the 30S ribosomal subunit. Forms a tight complex with proteins S10 and S14.

Binds the lower part of the 30S subunit head. Binds mRNA in the 70S ribosome, positioning it for translation. The chain is Small ribosomal subunit protein uS3 from Synechococcus sp. (strain JA-3-3Ab) (Cyanobacteria bacterium Yellowstone A-Prime).